The chain runs to 237 residues: Probable septum site-determining protein MinC (237 aa).

Belongs to the MinC family. In terms of assembly, interacts with MinD and FtsZ.

In terms of biological role, cell division inhibitor that blocks the formation of polar Z ring septums. Rapidly oscillates between the poles of the cell to destabilize FtsZ filaments that have formed before they mature into polar Z rings. Prevents FtsZ polymerization. This is Probable septum site-determining protein MinC from Neisseria gonorrhoeae.